The sequence spans 143 residues: Hemoglobin subunit alpha-1 (143 aa).

Position 2 is an N-acetylserine (S2). Positions 2 to 143 constitute a Globin domain; it reads SLTEKDKAAV…VSLALAERYR (142 aa). H60 is an O2 binding site. H89 contacts heme b.

This sequence belongs to the globin family. Hb 1 is a heterotetramer of two alpha-1 and two beta chains. As to expression, red blood cells.

Involved in oxygen transport from gills to the various peripheral tissues. This Cottoperca gobio (Frogmouth) protein is Hemoglobin subunit alpha-1 (hba1).